We begin with the raw amino-acid sequence, 194 residues long: Small ribosomal subunit protein uS4c (194 aa).

In terms of domain architecture, S4 RNA-binding spans 82-143 (MRLDNILFRL…KQRSKALIQD (62 aa)).

It belongs to the universal ribosomal protein uS4 family. Part of the 30S ribosomal subunit. Contacts protein S5. The interaction surface between S4 and S5 is involved in control of translational fidelity.

It localises to the plastid. The protein resides in the chloroplast. Its function is as follows. One of the primary rRNA binding proteins, it binds directly to 16S rRNA where it nucleates assembly of the body of the 30S subunit. With S5 and S12 plays an important role in translational accuracy. The sequence is that of Small ribosomal subunit protein uS4c (rps4) from Bobartia gladiata (Sword rush-lily).